The chain runs to 868 residues: B-cell receptor CD22 (868 aa).

An N-terminal signal peptide occupies residues 1 to 21 (MRVHYLWLLLILGHVASARYS). Residues 22–148 (SANDWTVDHP…MEPIHLNVSE (127 aa)) enclose the Ig-like V-type domain. Topologically, residues 22-708 (SANDWTVDHP…YYSPETIGKR (687 aa)) are extracellular. Cystine bridges form between cysteine 41/cysteine 177, cysteine 46/cysteine 112, and cysteine 171/cysteine 235. 2 N-linked (GlcNAc...) asparagine glycosylation sites follow: asparagine 111 and asparagine 122. Position 130 (arginine 130) interacts with N-acetylneuraminate. 9 N-linked (GlcNAc...) asparagine glycosylation sites follow: asparagine 145, asparagine 174, asparagine 271, asparagine 281, asparagine 384, asparagine 414, asparagine 466, asparagine 567, and asparagine 595. Ig-like C2-type domains are found at residues 153–250 (PYIQ…RTVR), 257–347 (PKLE…VELT), 352–435 (PEPS…AKLD), 440–521 (PKAV…VILN), 526–603 (PRDV…ETLS), and 614–697 (PRRL…STLT). 4 disulfides stabilise this stretch: cysteine 278/cysteine 330, cysteine 374/cysteine 417, cysteine 463/cysteine 505, and cysteine 550/cysteine 592. Cysteine 637 and cysteine 680 form a disulfide bridge. A helical membrane pass occupies residues 709-727 (VALGLGFCLTICILAIWGM). Over 728–868 (KIQKKWKQNR…EDVDYVTLKH (141 aa)) the chain is Cytoplasmic. Residues 738–752 (SQQGLQENSSGQSFF) show a composition bias toward polar residues. The disordered stretch occupies residues 738–772 (SQQGLQENSSGQSFFVRNKKARRTPLSEGPQSQGC). A phosphoserine mark is found at serine 746, serine 747, and serine 750. Positions 781–786 (VSYAIL) match the ITIM motif 1 motif. A Phosphotyrosine modification is found at tyrosine 783. The interval 790–812 (ESDTHNTGDAGTPATQAPPPNNS) is disordered. Phosphotyrosine is present on residues tyrosine 828, tyrosine 843, and tyrosine 863. 2 consecutive short sequence motifs (ITIM motif) follow at residues 841–846 (IHYSEL) and 861–866 (VDYVTL).

It belongs to the immunoglobulin superfamily. SIGLEC (sialic acid binding Ig-like lectin) family. As to quaternary structure, predominantly monomer of isoform CD22-beta. Also found as heterodimer of isoform CD22-beta and a shorter isoform. Interacts with PTPN6/SHP-1, LYN, SYK, PIK3R1/PIK3R2 and PLCG1 upon phosphorylation. Interacts with GRB2, INPP5D and SHC1 upon phosphorylation. May form a complex with INPP5D/SHIP, GRB2 and SHC1. In terms of processing, phosphorylated on tyrosine residues by LYN. Phosphorylation of Tyr-783 and Tyr-843 are involved in binding to SYK. Phosphorylation of Tyr-828 is involved in binding to GRB2. Phosphorylation of Tyr-863 is involved in binding to SYK, PLCG2 and PIK3R1/PIK3R2. As to expression, B-lymphocytes.

The protein resides in the cell membrane. Most highly expressed siglec (sialic acid-binding immunoglobulin-like lectin) on B-cells that plays a role in various aspects of B-cell biology including differentiation, antigen presentation, and trafficking to bone marrow. Binds to alpha 2,6-linked sialic acid residues of surface molecules such as CD22 itself, CD45 and IgM in a cis configuration. Can also bind to ligands on other cells as an adhesion molecule in a trans configuration. Acts as an inhibitory coreceptor on the surface of B-cells and inhibits B-cell receptor induced signaling, characterized by inhibition of the calcium mobilization and cellular activation. Mechanistically, the immunoreceptor tyrosine-based inhibitory motif domain is phosphorylated by the Src kinase LYN, which in turn leads to the recruitment of the protein tyrosine phosphatase 1/PTPN6, leading to the negative regulation of BCR signaling. If this negative signaling from is of sufficient strength, apoptosis of the B-cell can be induced. In Mus musculus (Mouse), this protein is B-cell receptor CD22.